Consider the following 106-residue polypeptide: Glutaredoxin-1 (106 aa).

Alanine 2 is subject to N-acetylalanine. Positions 3 to 106 constitute a Glutaredoxin domain; that stretch reads QAFVNSKIQP…TRLKQMGALQ (104 aa). Lysine 9 is modified (N6-succinyllysine). Disulfide bonds link cysteine 23–cysteine 26 and cysteine 79–cysteine 83.

It belongs to the glutaredoxin family.

The protein resides in the cytoplasm. Has a glutathione-disulfide oxidoreductase activity in the presence of NADPH and glutathione reductase. Reduces low molecular weight disulfides and proteins. The polypeptide is Glutaredoxin-1 (GLRX) (Bos taurus (Bovine)).